Consider the following 399-residue polypeptide: Elongation factor Tu (399 aa).

In terms of domain architecture, tr-type G spans K10–A209. Residues G19–T26 are G1. Residue G19 to T26 coordinates GTP. T26 is a binding site for Mg(2+). Residues G60–A64 are G2. The G3 stretch occupies residues D81–G84. GTP contacts are provided by residues D81 to H85 and N136 to D139. Residues N136–D139 form a G4 region. The tract at residues S174–L176 is G5.

The protein belongs to the TRAFAC class translation factor GTPase superfamily. Classic translation factor GTPase family. EF-Tu/EF-1A subfamily. As to quaternary structure, monomer.

The protein localises to the cytoplasm. It catalyses the reaction GTP + H2O = GDP + phosphate + H(+). GTP hydrolase that promotes the GTP-dependent binding of aminoacyl-tRNA to the A-site of ribosomes during protein biosynthesis. The chain is Elongation factor Tu from Campylobacter lari (strain RM2100 / D67 / ATCC BAA-1060).